The chain runs to 170 residues: Myelin-associated oligodendrocyte basic protein (170 aa).

The interval 69 to 170 is disordered; sequence SRRATSPQRP…GSPTRAPRFW (102 aa). Over residues 82–92 the composition is skewed to low complexity; that stretch reads PAASPVVVRAP. Phosphoserine is present on residues Ser85, Ser98, and Ser107. Tandem repeats lie at residues 93-101 and 105-110. The tract at residues 93-115 is 3 X 9 AA approximate tandem repeats; the sequence is PAKPKSPLMPAKPRSPPRPAKPR. Residues 111–115 form a 3; half-length repeat; that stretch reads PAKPR. The span at 118–130 shows a compositional bias: basic and acidic residues; that stretch reads SRTERQPRPRPEV. Over residues 138–151 the composition is skewed to low complexity; that stretch reads KPPQKSKQPARSSP.

The protein resides in the cytoplasm. It is found in the perinuclear region. Functionally, may play a role in compacting or stabilizing the myelin sheath possibly by binding the negatively charged acidic phospholipids of the cytoplasmic membrane. This Mus musculus (Mouse) protein is Myelin-associated oligodendrocyte basic protein (Mobp).